The sequence spans 712 residues: MPNLPGSSDSTQRHQRNPGTDELVCSSTKPNAAQENADTELAQEKHPQLLSPQTDIPPVCSQPNVSFAQCWDQNFFLDAALTGQNSMTLLGVFDLPNSHMNLTETLSSQLGLEPSQNAFGQGSFDPFVPSSEPSVHSTDNPWPSLPTQLAFQPTNNNTSSLALLGPDPEQLSTLPSSWTGPLDEWPPLDLGQDFAALLSPTYQAFEATPRHTHAHAHQPPRATRHITSQQSPEPYVQVHSTAKIVDRFLVPIAPKPILVERDGPVSGASLPSNPPTALSSTGTRKRKRFNKADRERVNQMRKLGSCFRCRMYKENCDPGLPCKNCMRVQVTRRTFFGPCIRIKWEEVHTFRAGDGDLGQIRATLQTFQWTLGGQVKSIDVQWPFRDDKVKPPILSIECQQFLPKHEHVAEEYSVAGQAYKILLPPWACSNTKAASKKVEAFVRQCQAPLEEEIRHTLNDPILLLTLDEARRYRNETGSKLVATALEIYAGAMMNSRYPASTESDIFGVVDQLHTPYFFDKVPLPPQLTCQIQIMVAQVMLDKQKNALKRLQERALSKNRHKVWYECYLTIFILLATIELVYQVQLRFVKAKQGVSDRNATNLSYVTQYMIEEWEESILTLVGLFHCVMNGGLPFTQSWEDGGENHRLTELDDKALVYVRSLKAEIEQRRGELIALRNRRGRWRYEQPLAAICQLFLPSQDGDKGEGRAAPPS.

4 stretches are compositionally biased toward polar residues: residues 1–10 (MPNLPGSSDS), 25–36 (CSSTKPNAAQEN), 131–145 (SEPS…WPSL), and 269–282 (SLPS…SSTG). 3 disordered regions span residues 1–43 (MPNL…ELAQ), 115–145 (SQNA…WPSL), and 264–294 (PVSG…KADR). Positions 306 to 339 (CFRCRMYKENCDPGLPCKNCMRVQVTRRTFFGPC) form a DNA-binding region, zn(2)-C6 fungal-type. The stretch at 530–560 (QIQIMVAQVMLDKQKNALKRLQERALSKNRH) forms a coiled coil.

The protein resides in the nucleus. Its function is as follows. Transcriptional regulator that may regulate the expression of the satratoxin biosynthesis SC3 cluster, one of the 3 clusters involved in the biosynthesis of satratoxins, trichothecene mycotoxins that are associated with human food poisonings. The polypeptide is Satratoxin biosynthesis SC3 cluster transcription factor SAT20 (Stachybotrys chartarum (strain CBS 109288 / IBT 7711) (Toxic black mold)).